The sequence spans 165 residues: Large ribosomal subunit protein uL11 (165 aa).

A Phosphoserine modification is found at Ser-38. Lys-40 is covalently cross-linked (Glycyl lysine isopeptide (Lys-Gly) (interchain with G-Cter in SUMO2)). Lys-48 is covalently cross-linked (Glycyl lysine isopeptide (Lys-Gly) (interchain with G-Cter in ubiquitin)). Lys-54 bears the N6-acetyllysine mark. A Glycyl lysine isopeptide (Lys-Gly) (interchain with G-Cter in ubiquitin) cross-link involves residue Lys-83. Ser-165 is modified (phosphoserine).

The protein belongs to the universal ribosomal protein uL11 family. In terms of assembly, component of the large ribosomal subunit. Mature ribosomes consist of a small (40S) and a large (60S) subunit. The 40S subunit contains about 33 different proteins and 1 molecule of RNA (18S). The 60S subunit contains about 49 different proteins and 3 molecules of RNA (28S, 5.8S and 5S). In terms of processing, ubiquitinated at Lys-48 and Lys-83 by RNF14 and RNF25 in response to ribosome collisions (ribosome stalling).

It is found in the cytoplasm. Component of the large ribosomal subunit. The ribosome is a large ribonucleoprotein complex responsible for the synthesis of proteins in the cell. Binds directly to 26S ribosomal RNA. This chain is Large ribosomal subunit protein uL11 (RPL12), found in Bos taurus (Bovine).